A 201-amino-acid polypeptide reads, in one-letter code: uncharacterized protein (201 aa).

A helical transmembrane segment spans residues 11 to 31 (IIILTIMILTIIIFTRTINGL).

It localises to the membrane. This is an uncharacterized protein from Acanthamoeba polyphaga mimivirus (APMV).